Consider the following 30-residue polypeptide: Sillucin (30 aa).

4 cysteine pairs are disulfide-bonded: C2-C7, C12-C24, C13-C30, and C14-C21.

It localises to the secreted. In terms of biological role, sillucin is an antimicrobial agent produced by the thermophilic fungus Rhizomucor pusillus in liquid culture; it is effective against Gram-positive bacteria at the level of RNA metabolism. This chain is Sillucin, found in Rhizomucor pusillus.